A 421-amino-acid chain; its full sequence is UDP-N-acetylglucosamine 1-carboxyvinyltransferase (421 aa).

22–23 (KN) contributes to the phosphoenolpyruvate binding site. Arg-92 is a binding site for UDP-N-acetyl-alpha-D-glucosamine. Cys-116 serves as the catalytic Proton donor. 2-(S-cysteinyl)pyruvic acid O-phosphothioketal is present on Cys-116. UDP-N-acetyl-alpha-D-glucosamine is bound by residues Asp-306 and Val-328.

Belongs to the EPSP synthase family. MurA subfamily.

The protein resides in the cytoplasm. The enzyme catalyses phosphoenolpyruvate + UDP-N-acetyl-alpha-D-glucosamine = UDP-N-acetyl-3-O-(1-carboxyvinyl)-alpha-D-glucosamine + phosphate. It functions in the pathway cell wall biogenesis; peptidoglycan biosynthesis. Functionally, cell wall formation. Adds enolpyruvyl to UDP-N-acetylglucosamine. This Thermotoga petrophila (strain ATCC BAA-488 / DSM 13995 / JCM 10881 / RKU-1) protein is UDP-N-acetylglucosamine 1-carboxyvinyltransferase.